Reading from the N-terminus, the 382-residue chain is tRNA-queuosine alpha-mannosyltransferase (382 aa).

Belongs to the glycosyltransferase group 1 family. Glycosyltransferase 4 subfamily.

Its subcellular location is the cytoplasm. It localises to the nucleus. The enzyme catalyses queuosine(34) in tRNA(Asp) + GDP-alpha-D-mannose = O-4''-alpha-D-mannosylqueuosine(34) in tRNA(Asp) + GDP + H(+). Glycosyltransferase that specifically catalyzes mannosylation of cytoplasmic tRNA(Asp) modified with queuosine at position 34 (queuosine(34)). Mannosylates the cyclopentene moiety of queuosine(34) in tRNA(Asp) to form mannosyl-queuosine(34). Mannosylation of queuosine(34) in tRNA(Asp) is required to slow-down elongation at cognate codons, GAC and GAU, thereby regulating protein translation. This is tRNA-queuosine alpha-mannosyltransferase (GTDC1) from Gallus gallus (Chicken).